The sequence spans 596 residues: Potassium-transporting ATPase potassium-binding subunit (596 aa).

Helical transmembrane passes span 6–26, 67–87, 136–156, 177–197, 283–303, 314–334, 413–433, 450–470, 518–538, and 560–580; these read ILTI…LGGF, AIGL…LQLF, GLTT…IALI, ITLY…VGQG, LSNF…CFTF, WVVL…AVHF, GLYG…LMIG, MVAI…AIAV, MLAI…LALA, and LFIV…YVPA.

This sequence belongs to the KdpA family. In terms of assembly, the system is composed of three essential subunits: KdpA, KdpB and KdpC.

Its subcellular location is the cell inner membrane. Part of the high-affinity ATP-driven potassium transport (or Kdp) system, which catalyzes the hydrolysis of ATP coupled with the electrogenic transport of potassium into the cytoplasm. This subunit binds the periplasmic potassium ions and delivers the ions to the membrane domain of KdpB through an intramembrane tunnel. The sequence is that of Potassium-transporting ATPase potassium-binding subunit from Polynucleobacter asymbioticus (strain DSM 18221 / CIP 109841 / QLW-P1DMWA-1) (Polynucleobacter necessarius subsp. asymbioticus).